A 155-amino-acid chain; its full sequence is V-type proton ATPase 16 kDa proteolipid subunit c (155 aa).

Residues 1-10 (MSESKSGPEY) lie on the Lumenal side of the membrane. Residues 11 to 33 (ASFFAVMGASAAMVFSALGAAYG) form a helical membrane-spanning segment. Residues 34–55 (TAKSGTGIAAMSVMRPEQIMKS) lie on the Cytoplasmic side of the membrane. The helical transmembrane segment at 56-76 (IIPVVMAGIIAIYGLVVAVLI) threads the bilayer. The Lumenal segment spans residues 77–92 (ANSLNDDISLYKSFLQ). The helical transmembrane segment at 93–114 (LGAGLSVGLSGLAAGFAIGIVG) threads the bilayer. At 115–131 (DAGVRGTAQQPRLFVGM) the chain is on the cytoplasmic side. A helical transmembrane segment spans residues 132-152 (ILILIFAEVLGLYGLIVALIL). At 153–155 (STK) the chain is on the lumenal side.

It belongs to the V-ATPase proteolipid subunit family. V-ATPase is a heteromultimeric enzyme made up of two complexes: the ATP-hydrolytic V1 complex and the proton translocation V0 complex. The V1 complex consists of three catalytic AB heterodimers that form a heterohexamer, three peripheral stalks each consisting of EG heterodimers, one central rotor including subunits D and F, and the regulatory subunits C and H. The proton translocation complex V0 consists of the proton transport subunit a, a ring of proteolipid subunits c9c'', rotary subunit d, subunits e and f, and the accessory subunits ATP6AP1/Ac45 and ATP6AP2/PRR. Interacts with the V0 complex V-ATPase subunit a4 ATP6V0A4. Interacts with LASS2. Interacts with RNF182; this interaction leads to ubiquitination and degradation via the proteasome pathway. In terms of assembly, (Microbial infection) Interacts with HTLV-1 accessory protein p12I. In terms of processing, ubiquitinated by RNF182, leading to its degradation via the ubiquitin-proteasome pathway.

The protein resides in the cytoplasmic vesicle. It localises to the clathrin-coated vesicle membrane. The protein localises to the secretory vesicle. Its subcellular location is the synaptic vesicle membrane. In terms of biological role, proton-conducting pore forming subunit of the V0 complex of vacuolar(H+)-ATPase (V-ATPase), a multisubunit enzyme composed of a peripheral complex (V1) that hydrolyzes ATP and a membrane integral complex (V0) that translocates protons. V-ATPase is responsible for acidifying and maintaining the pH of intracellular compartments, and in some cell types, it is targeted to the plasma membrane, where it is responsible for acidifying the extracellular environment. This Homo sapiens (Human) protein is V-type proton ATPase 16 kDa proteolipid subunit c (ATP6V0C).